Reading from the N-terminus, the 120-residue chain is Large ribosomal subunit protein uL22 (120 aa).

The interval 1–20 is disordered; the sequence is MFVNRRYTARGKNLPSSPKK.

This sequence belongs to the universal ribosomal protein uL22 family. In terms of assembly, part of the 50S ribosomal subunit.

Its function is as follows. This protein binds specifically to 23S rRNA; its binding is stimulated by other ribosomal proteins, e.g. L4, L17, and L20. It is important during the early stages of 50S assembly. It makes multiple contacts with different domains of the 23S rRNA in the assembled 50S subunit and ribosome. Functionally, the globular domain of the protein is located near the polypeptide exit tunnel on the outside of the subunit, while an extended beta-hairpin is found that lines the wall of the exit tunnel in the center of the 70S ribosome. This is Large ribosomal subunit protein uL22 from Borrelia hermsii (strain HS1 / DAH).